We begin with the raw amino-acid sequence, 431 residues long: TDP-daunosamine transferase DnrS (431 aa).

Positions 1 to 23 (MKVLVTAFAMDAHFNGVVPLAWA) are cleaved as a signal peptide.

It belongs to the glycosyltransferase 28 family.

The catalysed reaction is dTDP-beta-L-daunosamine + epsilon-rhodomycinone = rhodomycin D + dTDP + H(+). Its pathway is antibiotic biosynthesis; daunorubicin biosynthesis. It participates in antibiotic biosynthesis; carminomycin biosynthesis. In terms of biological role, involved in the biosynthesis of the anthracyclines carminomycin and daunorubicin (daunomycin) which are aromatic polyketide antibiotics that exhibit high cytotoxicity and are widely applied in the chemotherapy of a variety of cancers. Catalyzes the addition of the TDP activated glycoside, L-daunosamine-TDP (2,3,6-trideoxy-3-aminohexose-TDP) at position C-7 of epsilon-rhodomycinone to yield rhodomycin D. Glycosylation is a prerequisite for biological activity of anthracyclines and requires DnrQ which seems to act as an activator. The sequence is that of TDP-daunosamine transferase DnrS (dnrS) from Streptomyces peucetius.